The primary structure comprises 333 residues: 6-phosphogluconolactonase (333 aa).

The protein belongs to the cycloisomerase 2 family.

The catalysed reaction is 6-phospho-D-glucono-1,5-lactone + H2O = 6-phospho-D-gluconate + H(+). It functions in the pathway carbohydrate degradation; pentose phosphate pathway; D-ribulose 5-phosphate from D-glucose 6-phosphate (oxidative stage): step 2/3. Its function is as follows. Catalyzes the hydrolysis of 6-phosphogluconolactone to 6-phosphogluconate. This Yersinia enterocolitica serotype O:8 / biotype 1B (strain NCTC 13174 / 8081) protein is 6-phosphogluconolactonase.